We begin with the raw amino-acid sequence, 340 residues long: CaiB/baiF CoA-transferase family protein ZK892.4 (340 aa).

Asp154 acts as the Nucleophile in catalysis.

This sequence belongs to the CoA-transferase III family.

This chain is CaiB/baiF CoA-transferase family protein ZK892.4, found in Caenorhabditis elegans.